Consider the following 254-residue polypeptide: MAIDSKPHDDLQLFKTNLHPCGYWPDRWASDLVMDPNDPRLGAIYPQALAWGFRRSGNLLYRPHCEHCNACVPVRVNVNAFVPNRSQRRCLARNATLVTRIVPAERNAEQLSLYRRYLHQRHPDGGMDGHGAIEFDQFLIGPWGYGRFMEIREPATNGTPGQLLAVAVTDLTHQALSAVYTFYEPNAAARGLGTLAILHQIHWAQREQRPYLYLGYWIKDHFKMDYKRRFQKLEIYDGYRWRPFSTTYPTTHTL.

This sequence belongs to the R-transferase family. Bpt subfamily.

It localises to the cytoplasm. The enzyme catalyses N-terminal L-glutamyl-[protein] + L-leucyl-tRNA(Leu) = N-terminal L-leucyl-L-glutamyl-[protein] + tRNA(Leu) + H(+). The catalysed reaction is N-terminal L-aspartyl-[protein] + L-leucyl-tRNA(Leu) = N-terminal L-leucyl-L-aspartyl-[protein] + tRNA(Leu) + H(+). Its function is as follows. Functions in the N-end rule pathway of protein degradation where it conjugates Leu from its aminoacyl-tRNA to the N-termini of proteins containing an N-terminal aspartate or glutamate. This chain is Aspartate/glutamate leucyltransferase, found in Xylella fastidiosa (strain 9a5c).